The following is a 455-amino-acid chain: CDP-diacylglycerol--serine O-phosphatidyltransferase (455 aa).

PLD phosphodiesterase domains follow at residues 134–160 (VFGV…NNVY) and 356–383 (GDNT…NPRA).

The protein belongs to the CDP-alcohol phosphatidyltransferase class-II family. In terms of assembly, multimeric.

It localises to the cytoplasm. Its subcellular location is the cell inner membrane. The enzyme catalyses a CDP-1,2-diacyl-sn-glycerol + L-serine = a 1,2-diacyl-sn-glycero-3-phospho-L-serine + CMP + H(+). The chain is CDP-diacylglycerol--serine O-phosphatidyltransferase (pssA) from Haemophilus influenzae (strain ATCC 51907 / DSM 11121 / KW20 / Rd).